The chain runs to 212 residues: MSLFDKKHLVTQADALPGRNTPMPIATLHAVNEHSMTNVPAGMEIAYFAMGCFWGVERLFWQLPGVYSTAAGYAGGYTPNPTYREVCSGQTGHAEAVRIVYDPAVISYEQLLQTFWENHDPTQGMQQGNDHGTQYRSAIYPLTPEQNAAAHASRERFQSAMTAAGDHRPITTEIAHATPFYYAEDEHQQYLHKNPYGYCGIGGIGVCLPPDA.

Cys-52 is an active-site residue.

Belongs to the MsrA Met sulfoxide reductase family.

The catalysed reaction is L-methionyl-[protein] + [thioredoxin]-disulfide + H2O = L-methionyl-(S)-S-oxide-[protein] + [thioredoxin]-dithiol. It catalyses the reaction [thioredoxin]-disulfide + L-methionine + H2O = L-methionine (S)-S-oxide + [thioredoxin]-dithiol. Has an important function as a repair enzyme for proteins that have been inactivated by oxidation. Catalyzes the reversible oxidation-reduction of methionine sulfoxide in proteins to methionine. The protein is Peptide methionine sulfoxide reductase MsrA of Salmonella newport (strain SL254).